A 149-amino-acid polypeptide reads, in one-letter code: Calmodulin (149 aa).

Position 2 is an N-acetylalanine (alanine 2). 4 EF-hand domains span residues glutamate 8–asparagine 43, proline 44–aspartate 79, aspartate 81–lysine 116, and leucine 117–lysine 149. The Ca(2+) site is built by aspartate 21, aspartate 23, aspartate 25, threonine 27, glutamate 32, aspartate 57, aspartate 59, asparagine 61, threonine 63, glutamate 68, aspartate 94, aspartate 96, aspartate 98, tyrosine 100, glutamate 105, aspartate 130, aspartate 132, aspartate 134, glutamine 136, and glutamate 141.

This sequence belongs to the calmodulin family.

Its subcellular location is the cytoplasm. Calmodulin mediates the control of a large number of enzymes, ion channels and other proteins by Ca(2+). Among the enzymes to be stimulated by the calmodulin-Ca(2+) complex are a number of protein kinases and phosphatases. The protein is Calmodulin of Plasmodium falciparum (isolate 3D7).